A 645-amino-acid polypeptide reads, in one-letter code: Sodium-dependent phosphate transporter 2 (645 aa).

The Extracellular segment spans residues Met1–Glu5. Residues Tyr6–Ala26 form a helical membrane-spanning segment. The Cytoplasmic portion of the chain corresponds to Asn27 to Gln46. The helical transmembrane segment at Ala47–Gly67 threads the bilayer. Residues Glu68–Thr86 lie on the Extracellular side of the membrane. N-linked (GlcNAc...) asparagine glycosylation occurs at Asn81. Residues Leu87 to Phe107 form a helical membrane-spanning segment. Topologically, residues Leu108–Arg109 are cytoplasmic. The chain crosses the membrane as a helical span at residues Phe110 to Ile130. Residues Gly131–Lys142 are Extracellular-facing. The helical transmembrane segment at Ile143–Val163 threads the bilayer. Topologically, residues Leu164–Thr190 are cytoplasmic. Residues Ile191–Pro211 form a helical membrane-spanning segment. Residues Met212–Trp213 are Extracellular-facing. The helical transmembrane segment at Ala214–Val234 threads the bilayer. At Cys235 to Glu475 the chain is on the cytoplasmic side. A phosphoserine mark is found at Ser253, Ser256, Ser259, Ser268, Ser316, and Ser379. The interval Pro275–Gly320 is disordered. The segment at Arg448–Lys471 is disordered. The chain crosses the membrane as a helical span at residues Val476–Gly496. Residues Gly497–Ala523 are Extracellular-facing. Residues Ala524–Trp544 traverse the membrane as a helical segment. Over Gly545–Gly564 the chain is Cytoplasmic. A helical membrane pass occupies residues Phe565 to Ser579. The Extracellular segment spans residues Asn580–Ser586. A helical membrane pass occupies residues Thr587–Arg602. The Cytoplasmic portion of the chain corresponds to Ser603–Asn614. Residues Ile615–Ala635 form a helical membrane-spanning segment. Residues Leu636–Val645 lie on the Extracellular side of the membrane.

Belongs to the inorganic phosphate transporter (PiT) (TC 2.A.20) family. Homodimer.

The protein localises to the cell membrane. It localises to the apical cell membrane. The catalysed reaction is 2 Na(+)(out) + phosphate(out) = 2 Na(+)(in) + phosphate(in). Sodium-phosphate symporter which preferentially transports the monovalent form of phosphate with a stoichiometry of two sodium ions per phosphate ion. Plays a critical role in the determination of bone quality and strength by providing phosphate for bone mineralization. Required to maintain normal cerebrospinal fluid phosphate levels. Mediates phosphate-induced calcification of vascular smooth muscle cells (VCMCs) and can functionally compensate for loss of SLC20A1 in VCMCs. This is Sodium-dependent phosphate transporter 2 (SLC20A2) from Bos taurus (Bovine).